The primary structure comprises 490 residues: ATP synthase subunit beta, chloroplastic (490 aa).

169–176 (GGAGVGKT) contributes to the ATP binding site.

Belongs to the ATPase alpha/beta chains family. As to quaternary structure, F-type ATPases have 2 components, CF(1) - the catalytic core - and CF(0) - the membrane proton channel. CF(1) has five subunits: alpha(3), beta(3), gamma(1), delta(1), epsilon(1). CF(0) has four main subunits: a(1), b(1), b'(1) and c(9-12).

The protein resides in the plastid. Its subcellular location is the chloroplast thylakoid membrane. It carries out the reaction ATP + H2O + 4 H(+)(in) = ADP + phosphate + 5 H(+)(out). In terms of biological role, produces ATP from ADP in the presence of a proton gradient across the membrane. The catalytic sites are hosted primarily by the beta subunits. This Cyanidium caldarium (Red alga) protein is ATP synthase subunit beta, chloroplastic.